Reading from the N-terminus, the 492-residue chain is MTDLIRQDAAALAALIHSGEVSSVEVTRAHLDQIASTDETYRAFLHVAGEQALAAAKDVDDAIAAGSVPSGLAGVPLALKDVFTTRDMPTTCGSKILENWVPPYDATVTARLRGAGIPILGKTNMDEFAMGSSTENSAYGPTRNPWDVERVPGGSGGGSAAALAAFQAPLAIGTDTGGSIRQPAALTATVGVKPTYGTVSRFGLVACASSLDQGGPCARTVLDTALLHQVIAGHDPRDSTSVDEPVPDVVAAARAGASGDLKGVRVGVVTQLRGDGYQPGVMASFDAAVEQLTALGADVVEVSCPHFEYALPAYYLILPSEVSSNLARFDAMRYGMRVGDDGTHSAEEVMALTRAAGFGPEVKRRIMIGTYALSAGYYDAYYGRAQKVRTLIKRDLERAYEQVDVLVTPATPTTAFRLGEKVDDPLAMYQFDLCTLPLNLAGHCGMSVPSGLSADDGLPVGLQIMAPALADDRLYRVGAAYETARGALPAAL.

Catalysis depends on charge relay system residues lysine 80 and serine 155. Serine 179 acts as the Acyl-ester intermediate in catalysis.

It belongs to the amidase family. GatA subfamily. Heterotrimer of A, B and C subunits.

It catalyses the reaction L-glutamyl-tRNA(Gln) + L-glutamine + ATP + H2O = L-glutaminyl-tRNA(Gln) + L-glutamate + ADP + phosphate + H(+). Allows the formation of correctly charged Gln-tRNA(Gln) through the transamidation of misacylated Glu-tRNA(Gln) in organisms which lack glutaminyl-tRNA synthetase. The reaction takes place in the presence of glutamine and ATP through an activated gamma-phospho-Glu-tRNA(Gln). This Mycobacteroides abscessus (strain ATCC 19977 / DSM 44196 / CCUG 20993 / CIP 104536 / JCM 13569 / NCTC 13031 / TMC 1543 / L948) (Mycobacterium abscessus) protein is Glutamyl-tRNA(Gln) amidotransferase subunit A.